A 98-amino-acid polypeptide reads, in one-letter code: NADH-ubiquinone oxidoreductase chain 4L (98 aa).

3 helical membrane-spanning segments follow: residues 1–21 (MPVVYVNIFLAFIVSLTGLLI), 29–49 (SLLCLEGMMLSLFVMLTVTVL), and 61–81 (IILLVFAACEAALGLSLLVMV).

Belongs to the complex I subunit 4L family. Core subunit of respiratory chain NADH dehydrogenase (Complex I) which is composed of 45 different subunits.

Its subcellular location is the mitochondrion inner membrane. The catalysed reaction is a ubiquinone + NADH + 5 H(+)(in) = a ubiquinol + NAD(+) + 4 H(+)(out). Functionally, core subunit of the mitochondrial membrane respiratory chain NADH dehydrogenase (Complex I) which catalyzes electron transfer from NADH through the respiratory chain, using ubiquinone as an electron acceptor. Part of the enzyme membrane arm which is embedded in the lipid bilayer and involved in proton translocation. This Helarctos malayanus (Malayan sun bear) protein is NADH-ubiquinone oxidoreductase chain 4L (MT-ND4L).